A 412-amino-acid chain; its full sequence is MNYLPQQDPQVFAAIEQERKRQHAKIELIASENFVSRAVMEAQGSVLTNKYAEGYPGRRYYGGCEYVDIVEDLARERAKQLFGAEHVNVQPHSGAQANMAVYFTVLEHGDTVLGMNLSHGGHLTHGSPVNFSGIQYNFVEYGVDPETHVIDYDDVREKARLHRPKLIVAGASAYPRIIDFAKFREIADEVGAYLMVDMAHIAGLVAAGVHPNPVPYAHFVTTTTHKTLRGPRGGMILCQEQFAKQIDKAIFPGIQGGPLMHVIAAKAVALGEALQDDFKVYAKRVVENAKRLAAALQNEGFTLISGGTDNHLLLVDLRPQQLTGKTAEKVLDEVGITVNKNTIPYDPESPFVTSGIRIGTAAVTTRGFGLEEMDEIAAIIGLVLKNVGSEQALEEARQRVAALTEKFPLYQD.

Residues leucine 117 and 121–123 (GHL) contribute to the (6S)-5,6,7,8-tetrahydrofolate site. N6-(pyridoxal phosphate)lysine is present on lysine 226. 349 to 351 (SPF) contributes to the (6S)-5,6,7,8-tetrahydrofolate binding site.

The protein belongs to the SHMT family. As to quaternary structure, homodimer. The cofactor is pyridoxal 5'-phosphate.

The protein localises to the cytoplasm. The enzyme catalyses (6R)-5,10-methylene-5,6,7,8-tetrahydrofolate + glycine + H2O = (6S)-5,6,7,8-tetrahydrofolate + L-serine. The protein operates within one-carbon metabolism; tetrahydrofolate interconversion. Its pathway is amino-acid biosynthesis; glycine biosynthesis; glycine from L-serine: step 1/1. Functionally, catalyzes the reversible interconversion of serine and glycine with tetrahydrofolate (THF) serving as the one-carbon carrier. This reaction serves as the major source of one-carbon groups required for the biosynthesis of purines, thymidylate, methionine, and other important biomolecules. Also exhibits THF-independent aldolase activity toward beta-hydroxyamino acids, producing glycine and aldehydes, via a retro-aldol mechanism. The protein is Serine hydroxymethyltransferase of Geobacillus kaustophilus (strain HTA426).